The chain runs to 136 residues: MSNSSPETVSQPSQEVKYGEREIAEGQLITFPNPRVGRRYDINITLPEFTCKCPFSGYPDFATIYITYVPDERVVELKALKLYINSYRDRYISHEESANQILDDFVAACDPLEATVKADFTPRGNVHTVVEVKHRK.

C53 (thioimide intermediate) is an active-site residue. D60 (proton donor) is an active-site residue. Residues 75-77 (VEL) and 94-95 (HE) each bind substrate.

Belongs to the GTP cyclohydrolase I family. QueF type 1 subfamily.

It localises to the cytoplasm. The catalysed reaction is 7-aminomethyl-7-carbaguanine + 2 NADP(+) = 7-cyano-7-deazaguanine + 2 NADPH + 3 H(+). The protein operates within tRNA modification; tRNA-queuosine biosynthesis. Functionally, catalyzes the NADPH-dependent reduction of 7-cyano-7-deazaguanine (preQ0) to 7-aminomethyl-7-deazaguanine (preQ1). The sequence is that of NADPH-dependent 7-cyano-7-deazaguanine reductase from Trichormus variabilis (strain ATCC 29413 / PCC 7937) (Anabaena variabilis).